The chain runs to 599 residues: ATP-binding cassette sub-family E member 1 (599 aa).

2 4Fe-4S ferredoxin-type domains span residues 7-37 (RIAIVNHDKCKPKKCRQECKKSCPVVRMGKL) and 46-75 (KIAWISETLCIGCGICIKKCPFGALSIVNL). Residue lysine 20 forms a Glycyl lysine isopeptide (Lys-Gly) (interchain with G-Cter in ubiquitin) linkage. ABC transporter domains are found at residues 79-315 (LEKE…FLDG) and 342-562 (VKKM…LSQL). ATP is bound by residues 110-117 (GTNGIGKS) and 379-386 (GENGTGKT). Serine 417 is modified (phosphoserine). The residue at position 550 (threonine 550) is a Phosphothreonine.

Belongs to the ABC transporter superfamily. ABCE family. (Microbial infection) Interacts with Chandipura virus matrix protein. As to quaternary structure, interacts with PINK1. Interacts with CNOT4. Interacts with PELO. Probably heterodimerizes with RNASEL; this interaction inhibits RNASEL. In terms of assembly, (Microbial infection) Interacts with HIV-1 proteins Vif and Gag. (Microbial infection) Interacts with HIV-2 protein Gag. Post-translationally, ubiquitinated by CNOT4. Ubiquitination mediates the recruitment of autophagy receptors to the mitochondrial outer membrane and initiates mitophagy.

The protein localises to the cytoplasm. Its subcellular location is the mitochondrion. It carries out the reaction GTP + H2O = GDP + phosphate + H(+). The enzyme catalyses ATP + H2O = ADP + phosphate + H(+). It catalyses the reaction CTP + H2O = CDP + phosphate + H(+). The catalysed reaction is UTP + H2O = UDP + phosphate + H(+). In terms of biological role, nucleoside-triphosphatase (NTPase) involved in ribosome recycling by mediating ribosome disassembly. Able to hydrolyze ATP, GTP, UTP and CTP. Splits ribosomes into free 60S subunits and tRNA- and mRNA-bound 40S subunits. Acts either after canonical termination facilitated by release factors (ETF1/eRF1) or after recognition of stalled and vacant ribosomes by mRNA surveillance factors (PELO/Pelota). Involved in the No-Go Decay (NGD) pathway: recruited to stalled ribosomes by the Pelota-HBS1L complex, and drives the disassembly of stalled ribosomes, followed by degradation of damaged mRNAs as part of the NGD pathway. Also plays a role in quality control of translation of mitochondrial outer membrane-localized mRNA. As part of the PINK1-regulated signaling, ubiquitinated by CNOT4 upon mitochondria damage; this modification generates polyubiquitin signals that recruit autophagy receptors to the mitochondrial outer membrane and initiate mitophagy. RNASEL-specific protein inhibitor which antagonizes the binding of 2-5A (5'-phosphorylated 2',5'-linked oligoadenylates) to RNASEL. Negative regulator of the anti-viral effect of the interferon-regulated 2-5A/RNASEL pathway. Functionally, (Microbial infection) May act as a chaperone for post-translational events during HIV-1 capsid assembly. (Microbial infection) Plays a role in the down-regulation of the 2-5A/RNASEL pathway during encephalomyocarditis virus (EMCV) and HIV-1 infections. This is ATP-binding cassette sub-family E member 1 (ABCE1) from Homo sapiens (Human).